Here is a 305-residue protein sequence, read N- to C-terminus: Putative monooxygenase p33MONOX (305 aa).

Residues Leu-37 to Lys-56 are disordered. Phosphothreonine is present on Thr-44. Residues Leu-67–Leu-77 carry the Flavin-containing monooxygenase motif motif. 2 disordered regions span residues Gln-158–Ser-236 and Gln-259–Phe-305. Residues Pro-169–Ser-183 show a composition bias toward low complexity. Thr-175 is modified (phosphothreonine). Residues Ser-182 and Ser-183 each carry the phosphoserine modification. Residues Thr-193–Ser-210 show a composition bias toward polar residues.

It belongs to the P33MONOX family. Interacts with NELFB, NOL12 and PRNP. Down-regulated in the occipital lobe of an early stage Alzheimer disease patients.

The protein localises to the cytoplasm. Functionally, potential NADPH-dependent oxidoreductase. May be involved in the regulation of neuronal survival, differentiation and axonal outgrowth. The chain is Putative monooxygenase p33MONOX (KIAA1191) from Homo sapiens (Human).